Reading from the N-terminus, the 200-residue chain is dITP/XTP pyrophosphatase (200 aa).

7-12 contributes to the substrate binding site; sequence SNNYHK. Asp68 serves as the catalytic Proton acceptor. Residue Asp68 participates in Mg(2+) binding. Substrate contacts are provided by residues Ser69, 147–150, Lys170, and 175–176; these read FGYD and HR.

It belongs to the HAM1 NTPase family. In terms of assembly, homodimer. Mg(2+) is required as a cofactor.

It catalyses the reaction XTP + H2O = XMP + diphosphate + H(+). It carries out the reaction dITP + H2O = dIMP + diphosphate + H(+). The enzyme catalyses ITP + H2O = IMP + diphosphate + H(+). Its function is as follows. Pyrophosphatase that catalyzes the hydrolysis of nucleoside triphosphates to their monophosphate derivatives, with a high preference for the non-canonical purine nucleotides XTP (xanthosine triphosphate), dITP (deoxyinosine triphosphate) and ITP. Seems to function as a house-cleaning enzyme that removes non-canonical purine nucleotides from the nucleotide pool, thus preventing their incorporation into DNA/RNA and avoiding chromosomal lesions. The polypeptide is dITP/XTP pyrophosphatase (Acholeplasma laidlawii (strain PG-8A)).